The sequence spans 290 residues: 4-hydroxybenzoate octaprenyltransferase (290 aa).

The next 8 membrane-spanning stretches (helical) occupy residues 21–41, 44–64, 84–104, 106–126, 142–162, 212–232, 235–255, and 267–287; these read IGTL…VKGM, LSIL…GCVI, LATG…LVFC, FILV…AVFL, LFLG…SIEA, IISL…YLSQ, TSYF…CKLI, and FLNN…GIFF.

The protein belongs to the UbiA prenyltransferase family. The cofactor is Mg(2+).

The protein localises to the cell inner membrane. The enzyme catalyses all-trans-octaprenyl diphosphate + 4-hydroxybenzoate = 4-hydroxy-3-(all-trans-octaprenyl)benzoate + diphosphate. The protein operates within cofactor biosynthesis; ubiquinone biosynthesis. Catalyzes the prenylation of para-hydroxybenzoate (PHB) with an all-trans polyprenyl group. Mediates the second step in the final reaction sequence of ubiquinone-8 (UQ-8) biosynthesis, which is the condensation of the polyisoprenoid side chain with PHB, generating the first membrane-bound Q intermediate 3-octaprenyl-4-hydroxybenzoate. The chain is 4-hydroxybenzoate octaprenyltransferase from Pasteurella multocida (strain Pm70).